A 142-amino-acid polypeptide reads, in one-letter code: Multiprotein-bridging factor 1b (142 aa).

Positions 49–75 are disordered; sequence NAGSNKAASSGTSLNTKKLDDDTENLS. Positions 50 to 64 are enriched in polar residues; the sequence is AGSNKAASSGTSLNT. Over residues 65–75 the composition is skewed to basic and acidic residues; sequence KKLDDDTENLS. In terms of domain architecture, HTH cro/C1-type spans 87–141; it reads IMQARGEKKLTQSQLAHLINEKPQVIQEYESGKAIPNQQILSKLERALGAKLRGK. The H-T-H motif DNA-binding region spans 98–117; sequence QSQLAHLINEKPQVIQEYES.

Belongs to the MBF1 family. In terms of tissue distribution, expressed in leaves, roots, stems, petioles and shoots. Higher expression in flowers and siliques. Detected in leaf veins through development.

It localises to the nucleus. Its subcellular location is the nucleolus. In terms of biological role, transcriptional coactivator that stimulates transcriptional activity by bridging regulatory proteins and TBP, thereby recruiting TBP to promoters occupied by DNA-binding regulators. This is Multiprotein-bridging factor 1b (MBF1B) from Arabidopsis thaliana (Mouse-ear cress).